The primary structure comprises 405 residues: Phosphopentomutase (405 aa).

The Mn(2+) site is built by aspartate 10, aspartate 303, histidine 308, aspartate 344, histidine 345, and histidine 356.

Belongs to the phosphopentomutase family. Mn(2+) serves as cofactor.

Its subcellular location is the cytoplasm. The catalysed reaction is 2-deoxy-alpha-D-ribose 1-phosphate = 2-deoxy-D-ribose 5-phosphate. The enzyme catalyses alpha-D-ribose 1-phosphate = D-ribose 5-phosphate. The protein operates within carbohydrate degradation; 2-deoxy-D-ribose 1-phosphate degradation; D-glyceraldehyde 3-phosphate and acetaldehyde from 2-deoxy-alpha-D-ribose 1-phosphate: step 1/2. Isomerase that catalyzes the conversion of deoxy-ribose 1-phosphate (dRib-1-P) and ribose 1-phosphate (Rib-1-P) to deoxy-ribose 5-phosphate (dRib-5-P) and ribose 5-phosphate (Rib-5-P), respectively. This Shewanella denitrificans (strain OS217 / ATCC BAA-1090 / DSM 15013) protein is Phosphopentomutase.